We begin with the raw amino-acid sequence, 116 residues long: Large ribosomal subunit protein uL18 (116 aa).

Belongs to the universal ribosomal protein uL18 family. Part of the 50S ribosomal subunit; part of the 5S rRNA/L5/L18/L25 subcomplex. Contacts the 5S and 23S rRNAs.

This is one of the proteins that bind and probably mediate the attachment of the 5S RNA into the large ribosomal subunit, where it forms part of the central protuberance. In Acholeplasma laidlawii (strain PG-8A), this protein is Large ribosomal subunit protein uL18.